A 171-amino-acid chain; its full sequence is Ribosome maturation factor RimM (171 aa).

Positions 94–168 constitute a PRC barrel domain; it reads NDEFYKDELI…MTIVPPEIVG (75 aa).

It belongs to the RimM family. As to quaternary structure, binds ribosomal protein uS19.

The protein resides in the cytoplasm. An accessory protein needed during the final step in the assembly of 30S ribosomal subunit, possibly for assembly of the head region. Essential for efficient processing of 16S rRNA. May be needed both before and after RbfA during the maturation of 16S rRNA. It has affinity for free ribosomal 30S subunits but not for 70S ribosomes. The sequence is that of Ribosome maturation factor RimM from Anaplasma phagocytophilum (strain HZ).